The primary structure comprises 727 residues: Procollagen-lysine,2-oxoglutarate 5-dioxygenase 1 (727 aa).

The signal sequence occupies residues 1–18 (MRPLLLLAPLGWLLLAEA). N-linked (GlcNAc...) asparagine glycosylation is found at Asn163, Asn197, and Asn538. Positions 636–727 (QFDLAFVVRY…RYIAVSFVDP (92 aa)) constitute a Fe2OG dioxygenase domain. Fe cation-binding residues include His656 and Asp658. Asn686 carries an N-linked (GlcNAc...) asparagine glycan. His708 lines the Fe cation pocket. Arg718 is a catalytic residue.

As to quaternary structure, homodimer. Identified in a complex with P3H3 and P3H4. Fe(2+) serves as cofactor. Requires L-ascorbate as cofactor.

The protein resides in the rough endoplasmic reticulum membrane. The catalysed reaction is L-lysyl-[collagen] + 2-oxoglutarate + O2 = (5R)-5-hydroxy-L-lysyl-[collagen] + succinate + CO2. Its function is as follows. Part of a complex composed of PLOD1, P3H3 and P3H4 that catalyzes hydroxylation of lysine residues in collagen alpha chains and is required for normal assembly and cross-linkling of collagen fibrils. Forms hydroxylysine residues in -Xaa-Lys-Gly- sequences in collagens. These hydroxylysines serve as sites of attachment for carbohydrate units and are essential for the stability of the intermolecular collagen cross-links. The chain is Procollagen-lysine,2-oxoglutarate 5-dioxygenase 1 (PLOD1) from Pongo abelii (Sumatran orangutan).